A 153-amino-acid polypeptide reads, in one-letter code: Endoribonuclease YbeY (153 aa).

Residues H116, H120, and H126 each contribute to the Zn(2+) site.

It belongs to the endoribonuclease YbeY family. It depends on Zn(2+) as a cofactor.

It is found in the cytoplasm. Single strand-specific metallo-endoribonuclease involved in late-stage 70S ribosome quality control and in maturation of the 3' terminus of the 16S rRNA. The sequence is that of Endoribonuclease YbeY from Paraburkholderia phytofirmans (strain DSM 17436 / LMG 22146 / PsJN) (Burkholderia phytofirmans).